The primary structure comprises 189 residues: Peptidyl-tRNA hydrolase (189 aa).

Tyr-15 lines the tRNA pocket. Catalysis depends on His-20, which acts as the Proton acceptor. Residues Tyr-64, Asn-66, and Asn-112 each contribute to the tRNA site.

It belongs to the PTH family. Monomer.

Its subcellular location is the cytoplasm. It carries out the reaction an N-acyl-L-alpha-aminoacyl-tRNA + H2O = an N-acyl-L-amino acid + a tRNA + H(+). Functionally, hydrolyzes ribosome-free peptidyl-tRNAs (with 1 or more amino acids incorporated), which drop off the ribosome during protein synthesis, or as a result of ribosome stalling. Its function is as follows. Catalyzes the release of premature peptidyl moieties from peptidyl-tRNA molecules trapped in stalled 50S ribosomal subunits, and thus maintains levels of free tRNAs and 50S ribosomes. The chain is Peptidyl-tRNA hydrolase from Sulfurihydrogenibium sp. (strain YO3AOP1).